A 257-amino-acid polypeptide reads, in one-letter code: Snake venom serine protease Dav-KN (257 aa).

The N-terminal stretch at 1–18 (MVLIRVLANLLILQLSYA) is a signal peptide. Residues 19-24 (QKSSEL) constitute a propeptide that is removed on maturation. Positions 25-248 (VIGGDECNIN…HLDWIKGIIA (224 aa)) constitute a Peptidase S1 domain. Cystine bridges form between Cys31–Cys162, Cys49–Cys65, Cys97–Cys255, Cys173–Cys188, and Cys199–Cys224. Catalysis depends on charge relay system residues His64 and Asp109. Catalysis depends on Ser203, which acts as the Charge relay system.

This sequence belongs to the peptidase S1 family. Snake venom subfamily. Monomer. As to expression, expressed by the venom gland.

It is found in the secreted. Snake venom serine protease that may act in the hemostasis system of the prey. The chain is Snake venom serine protease Dav-KN from Deinagkistrodon acutus (Hundred-pace snake).